The sequence spans 74 residues: Translational regulator CsrA (74 aa).

Belongs to the CsrA/RsmA family. As to quaternary structure, homodimer. The beta-strands of each monomer intercalate to form a hydrophobic core while the alpha-helices form wings that extend away from the core. Two molecules of FliW interact with 1 homodimer. mRNA and FliW bind to different sites on CsrA.

It is found in the cytoplasm. A translational regulator that binds mRNA to regulate translation initiation and/or mRNA stability. Usually binds in the 5'-UTR at or near the Shine-Dalgarno sequence preventing ribosome-binding, thus repressing translation. Represses expression of flagellin (hag) in a post-transcriptional fashion. Specifically binds to 2 sites in the 5'-UTR of hag mRNA in a cooperative fashion; the second site overlaps the Shine-Dalgarno sequence and prevents 30S ribosomal subunit binding. Mutation of either binding site abolishes CsrA regulation of hag expression. Repression is greater in the 1A96 than 168 genetic background and higher in minimal than rich medium. Translation repression is antagonized by FliW. Partner switching by flagellin between FliW and CsrA provides a flagellar assembly checkpoint to tightly control the timing of flagellin synthesis. Flagellin binds to assembly factor FliW, freeing CsrA to repress translation of the flagellin mRNA. When the flagellar hook is assembled flagellin is secreted, depleting intracellular flagellin, which frees FliW to interact with CsrA and inhibits CsrA binding to mRNA. This derepresses flagellin translation and provides protein for flagellar assembly. Once the flagellar filament is completed cytoplasmic flagellin levels rise and CsrA translation repression of flagellin reinitiates. Overexpression leads to a dramatic reduction in motility, a significant reduction in flagellin synthesis and reduced flagella assembly. The polypeptide is Translational regulator CsrA (Bacillus subtilis (strain 168)).